A 282-amino-acid polypeptide reads, in one-letter code: Probable endonuclease 4 (282 aa).

The Zn(2+) site is built by H71, H111, E147, D181, H184, H218, D231, H233, and E263.

The protein belongs to the AP endonuclease 2 family. It depends on Zn(2+) as a cofactor.

It carries out the reaction Endonucleolytic cleavage to 5'-phosphooligonucleotide end-products.. Its function is as follows. Endonuclease IV plays a role in DNA repair. It cleaves phosphodiester bonds at apurinic or apyrimidinic (AP) sites, generating a 3'-hydroxyl group and a 5'-terminal sugar phosphate. The chain is Probable endonuclease 4 from Protochlamydia amoebophila (strain UWE25).